The primary structure comprises 375 residues: Holliday junction branch migration complex subunit RuvB (375 aa).

The interval 1–50 is disordered; sequence MAIVSSKSPDPAERRSQAKTKPSVSEPQDSLVRPQAAPEESQRPEDQIRP. A large ATPase domain (RuvB-L) region spans residues 13–209; it reads ERRSQAKTKP…FGLVQRLRFY (197 aa). Residues 19-28 show a composition bias toward polar residues; that stretch reads KTKPSVSEPQ. Positions 40–49 are enriched in basic and acidic residues; the sequence is ESQRPEDQIR. Residues isoleucine 48, arginine 49, glycine 90, lysine 93, threonine 94, threonine 95, 156–158, arginine 199, tyrosine 209, and arginine 246 each bind ATP; that span reads EDF. Threonine 94 contributes to the Mg(2+) binding site. Positions 210 to 280 are small ATPAse domain (RuvB-S); sequence EVEALTDIVQ…IAATALELYN (71 aa). Positions 283 to 375 are head domain (RuvB-H); it reads PCGLDWTDRR…LQQLLTEPET (93 aa). DNA is bound by residues arginine 338 and arginine 343.

The protein belongs to the RuvB family. Homohexamer. Forms an RuvA(8)-RuvB(12)-Holliday junction (HJ) complex. HJ DNA is sandwiched between 2 RuvA tetramers; dsDNA enters through RuvA and exits via RuvB. An RuvB hexamer assembles on each DNA strand where it exits the tetramer. Each RuvB hexamer is contacted by two RuvA subunits (via domain III) on 2 adjacent RuvB subunits; this complex drives branch migration. In the full resolvosome a probable DNA-RuvA(4)-RuvB(12)-RuvC(2) complex forms which resolves the HJ.

It localises to the cytoplasm. It catalyses the reaction ATP + H2O = ADP + phosphate + H(+). Functionally, the RuvA-RuvB-RuvC complex processes Holliday junction (HJ) DNA during genetic recombination and DNA repair, while the RuvA-RuvB complex plays an important role in the rescue of blocked DNA replication forks via replication fork reversal (RFR). RuvA specifically binds to HJ cruciform DNA, conferring on it an open structure. The RuvB hexamer acts as an ATP-dependent pump, pulling dsDNA into and through the RuvAB complex. RuvB forms 2 homohexamers on either side of HJ DNA bound by 1 or 2 RuvA tetramers; 4 subunits per hexamer contact DNA at a time. Coordinated motions by a converter formed by DNA-disengaged RuvB subunits stimulates ATP hydrolysis and nucleotide exchange. Immobilization of the converter enables RuvB to convert the ATP-contained energy into a lever motion, pulling 2 nucleotides of DNA out of the RuvA tetramer per ATP hydrolyzed, thus driving DNA branch migration. The RuvB motors rotate together with the DNA substrate, which together with the progressing nucleotide cycle form the mechanistic basis for DNA recombination by continuous HJ branch migration. Branch migration allows RuvC to scan DNA until it finds its consensus sequence, where it cleaves and resolves cruciform DNA. The sequence is that of Holliday junction branch migration complex subunit RuvB from Synechococcus elongatus (strain ATCC 33912 / PCC 7942 / FACHB-805) (Anacystis nidulans R2).